Consider the following 313-residue polypeptide: tRNA dimethylallyltransferase (313 aa).

11-18 (GPTASGKT) lines the ATP pocket. 13–18 (TASGKT) is a binding site for substrate. Interaction with substrate tRNA stretches follow at residues 36–39 (DSAL), 160–164 (QRINR), and 241–246 (RCVGYR).

Belongs to the IPP transferase family. In terms of assembly, monomer. Mg(2+) is required as a cofactor.

The enzyme catalyses adenosine(37) in tRNA + dimethylallyl diphosphate = N(6)-dimethylallyladenosine(37) in tRNA + diphosphate. Catalyzes the transfer of a dimethylallyl group onto the adenine at position 37 in tRNAs that read codons beginning with uridine, leading to the formation of N6-(dimethylallyl)adenosine (i(6)A). This Haemophilus ducreyi (strain 35000HP / ATCC 700724) protein is tRNA dimethylallyltransferase.